Reading from the N-terminus, the 129-residue chain is MVERLGIAVEDRSPKLRKQAIRERFVLFKKNTERVEKYEYYAIRGQSIYINGRLSKLQSERYPKMIILLDIFCQPNPRNLFLRFKERIDGKSEWENNFTYAGNNIGCTKEMESDMIRIFNELDDEKRDV.

This is an uncharacterized protein from Acheta domesticus (House cricket).